The primary structure comprises 384 residues: Zinc finger CCCH domain-containing protein 12 (384 aa).

2 disordered regions span residues 1 to 32 and 46 to 81; these read MSHH…NLGD and WAMN…SAAS. The span at 50–60 shows a compositional bias: polar residues; that stretch reads PDNTSGDNNGP. A compositionally biased stretch (low complexity) spans 70-81; that stretch reads SSSSATTTSAAS. 2 C3H1-type zinc fingers span residues 91 to 118 and 172 to 200; these read FFKT…HTVE and SFKG…HDEA. The interval 211–231 is disordered; it reads LGPGGYGSGGGGGSGGGSVGG. The segment covering 212-231 has biased composition (gly residues); it reads GPGGYGSGGGGGSGGGSVGG. The C3H1-type 3 zinc-finger motif lies at 260-288; the sequence is NWKTRICNKWEITGYCPFGAKCHFAHGAA. Positions 299–335 are disordered; the sequence is EEEGKDGVSPNPDTKQTVQNPKGLSDTTTLLSPGVPH. Polar residues predominate over residues 309 to 329; sequence NPDTKQTVQNPKGLSDTTTLL.

In Arabidopsis thaliana (Mouse-ear cress), this protein is Zinc finger CCCH domain-containing protein 12.